A 319-amino-acid polypeptide reads, in one-letter code: Ribonucleoside-diphosphate reductase small chain (319 aa).

Residues D70, E101, and H104 each coordinate Fe cation. The active site involves Y108. E163, E197, and H200 together coordinate Fe cation. An interaction with R1 region spans residues 313 to 319 (FSLDVDF).

The protein belongs to the ribonucleoside diphosphate reductase small chain family. Interacts with RNR1/OPG080 subunit. Can interact with host RNR1 supunit. Requires Fe cation as cofactor.

It catalyses the reaction a 2'-deoxyribonucleoside 5'-diphosphate + [thioredoxin]-disulfide + H2O = a ribonucleoside 5'-diphosphate + [thioredoxin]-dithiol. Its function is as follows. Ribonucleoside-diphosphate reductase holoenzyme provides the precursors necessary for viral DNA synthesis. Allows virus growth in non-dividing cells. Catalyzes the biosynthesis of deoxyribonucleotides from the corresponding ribonucleotides. This chain is Ribonucleoside-diphosphate reductase small chain (OPG048), found in Vaccinia virus (strain Ankara) (VACV).